A 135-amino-acid polypeptide reads, in one-letter code: Large ribosomal subunit protein uL16c (135 aa).

It belongs to the universal ribosomal protein uL16 family. As to quaternary structure, part of the 50S ribosomal subunit.

The protein resides in the plastid. It localises to the chloroplast. The polypeptide is Large ribosomal subunit protein uL16c (Olimarabidopsis pumila (Dwarf rocket)).